The chain runs to 445 residues: Glycine--tRNA ligase (445 aa).

Substrate contacts are provided by Arg97 and Glu145. Residues 177–179 (RNE), 187–192 (FRTCEF), 262–263 (EV), and 308–311 (GLTR) each bind ATP. Position 192–196 (192–196 (FEQME)) interacts with substrate. 304–308 (ETSAG) is a substrate binding site.

It belongs to the class-II aminoacyl-tRNA synthetase family. In terms of assembly, homodimer.

It localises to the cytoplasm. The catalysed reaction is tRNA(Gly) + glycine + ATP = glycyl-tRNA(Gly) + AMP + diphosphate. In terms of biological role, catalyzes the attachment of glycine to tRNA(Gly). The polypeptide is Glycine--tRNA ligase (Borreliella burgdorferi (strain ZS7) (Borrelia burgdorferi)).